The following is a 78-amino-acid chain: DNA-directed RNA polymerase subunit omega (78 aa).

The protein belongs to the RNA polymerase subunit omega family. In cyanobacteria the RNAP catalytic core is composed of 2 alpha, 1 beta, 1 beta', 1 gamma and 1 omega subunit. When a sigma factor is associated with the core the holoenzyme is formed, which can initiate transcription.

It carries out the reaction RNA(n) + a ribonucleoside 5'-triphosphate = RNA(n+1) + diphosphate. Functionally, promotes RNA polymerase assembly. Latches the N- and C-terminal regions of the beta' subunit thereby facilitating its interaction with the beta and alpha subunits. This is DNA-directed RNA polymerase subunit omega from Prochlorococcus marinus (strain MIT 9312).